The chain runs to 417 residues: Serine/threonine-protein kinase SBK1 (417 aa).

Positions 53-318 constitute a Protein kinase domain; sequence YELVRELGKG…VFRFLKHELT (266 aa). ATP-binding positions include 59–67 and Lys82; that span reads LGKGTYGKV. Asp174 acts as the Proton acceptor in catalysis. Residues 321 to 405 are disordered; the sequence is LRRRPSHRAR…TDGRTDKSKG (85 aa). Positions 363-382 are enriched in pro residues; it reads PSPPSVGPVVPVPVPVPVPV.

It belongs to the protein kinase superfamily. Ser/Thr protein kinase family.

The protein resides in the cytoplasm. It catalyses the reaction L-seryl-[protein] + ATP = O-phospho-L-seryl-[protein] + ADP + H(+). It carries out the reaction L-threonyl-[protein] + ATP = O-phospho-L-threonyl-[protein] + ADP + H(+). Its function is as follows. May be involved in signal-transduction pathways related to the control of brain development. This is Serine/threonine-protein kinase SBK1 (Sbk1) from Mus musculus (Mouse).